The chain runs to 450 residues: Protein tweety homolog 1 (450 aa).

Over 1-43 the chain is Extracellular; the sequence is MGAPPGYRPSAWVHLLHQLPRADFQLRPVPSGFAPRDQEYQQA. Residues 44–64 traverse the membrane as a helical segment; sequence LLLVAALAGLGLGLSLIFIAV. Topologically, residues 65–88 are cytoplasmic; the sequence is YLIRFCCCRPPEPPGAKSPPPGGG. Residues 89 to 109 form a helical membrane-spanning segment; the sequence is CVTWSCIAALLVGCAGIGIGF. Residues 110–214 lie on the Extracellular side of the membrane; that stretch reads YGNSETSDGV…DVTFVEEYRW (105 aa). Residue Asn-130 is glycosylated (N-linked (GlcNAc...) asparagine). The helical transmembrane segment at 215-235 threads the bilayer; that stretch reads LAYVLLLLLVLLVCLFTLLGL. Over 236 to 240 the chain is Cytoplasmic; sequence AKQSK. The helical transmembrane segment at 241–261 threads the bilayer; sequence WLVVVMTAMSLLVLVLSWGSM. Over 262–390 the chain is Extracellular; the sequence is GLEAATAVGL…LRGLCEDALE (129 aa). Intrachain disulfides connect Cys-275-Cys-385 and Cys-303-Cys-370. Asn-284 and Asn-355 each carry an N-linked (GlcNAc...) asparagine glycan. A helical transmembrane segment spans residues 391-411; that stretch reads GLLFLMLFSLLSAGALATTLC. The Cytoplasmic segment spans residues 412–450; the sequence is SLPRAWALFPPSDDYDDTDDDDPFNPQESKRFVQWQSSI. The tract at residues 428-450 is disordered; it reads DTDDDDPFNPQESKRFVQWQSSI. Ser-440 carries the post-translational modification Phosphoserine.

This sequence belongs to the tweety family. As to quaternary structure, homotetramer; disulfide-linked. Homodimer. N-glycosylated. Contains high-mannose, hybrid and complex oligosaccharides.

It localises to the cell membrane. It catalyses the reaction chloride(in) = chloride(out). It carries out the reaction L-glutamate(out) = L-glutamate(in). Calcium-independent, swelling-dependent volume-regulated anion channel (VRAC-swell) which plays a pivotal role in the process of regulatory volume decrease (RVD) in the brain through the efflux of anions like chloride and organic osmolytes like glutamate. This chain is Protein tweety homolog 1 (Ttyh1), found in Rattus norvegicus (Rat).